Here is a 577-residue protein sequence, read N- to C-terminus: MTAWSLHELWKTSHSTLFQVTLATVLMAPVLGDCGPPPSLPFASPISQLDEVSFPPGAVLKYTCHHGFKRTNSSHITCDENGSWVYTTFCARKRCKNPGELVNGKIEILSDLLVGLNIEFSCSEGYLLIGSATSRCEVQGKGVNWSDSLPECVIATCEPPPVINNGKHSGREEDLYTYGSMVIYSCDPSYTLFGNASIVCTVVNKTVGVWSPHPPACEKIVCHQPQIPKGELVPGFRHFHTYKDALEIRCKKGFALRGNSVIHCEANGEWFPSVPTCEPNGCIDIPDISYASWDGNRFPLENTAVFEIGTKLKYRCKPGYRANVHDVQIVTCQENLTWSSPSGCERVCCPTPNMEKIKIVSERRDFTGTCVYAYGDYVFYICSEGTYPMTTDGRSSCQADGKWDPAIPSCEADPSLQNHFALTFPNISETNVTNRTYLLENENATESFIKAVCPKPEIINGNLSVEKEIYAEMENITIQCDSGYDLVGSSNIICLENRTWYPDIPFCIMEGPEDCEIVNKGRQLLQCLSSPEDVQRALEVYKLSLEIERLEQQREKRTSVHRKAHYTKVDGPFRPFS.

The signal sequence occupies residues 1–32; that stretch reads MTAWSLHELWKTSHSTLFQVTLATVLMAPVLG. Sushi domains follow at residues 33–92, 93–154, 155–219, 220–279, 280–346, and 347–412; these read DCGP…FCAR, KRCK…ECVI, ATCE…ACEK, IVCH…TCEP, NGCI…GCER, and VCCP…SCEA. 12 cysteine pairs are disulfide-bonded: Cys-34–Cys-78, Cys-64–Cys-90, Cys-95–Cys-136, Cys-122–Cys-152, Cys-157–Cys-200, Cys-186–Cys-217, Cys-222–Cys-264, Cys-250–Cys-277, Cys-282–Cys-332, Cys-316–Cys-344, Cys-349–Cys-397, and Cys-382–Cys-410. Asn-72 and Asn-81 each carry an N-linked (GlcNAc...) asparagine glycan. N-linked (GlcNAc...) asparagine glycans are attached at residues Asn-144, Asn-195, and Asn-204. Residue Asn-335 is glycosylated (N-linked (GlcNAc...) asparagine). Asn-426, Asn-431, Asn-434, Asn-443, Asn-462, Asn-475, and Asn-497 each carry an N-linked (GlcNAc...) asparagine glycan. Residues 451–509 enclose the Sushi 7 domain; sequence AVCPKPEIINGNLSVEKEIYAEMENITIQCDSGYDLVGSSNIICLENRTWYPDIPFCIM. Disulfide bonds link Cys-453-Cys-494 and Cys-480-Cys-507.

As to quaternary structure, homomultimer; disulfide-linked. Post-translationally, glycosylated. In terms of tissue distribution, testis specific.

The protein resides in the cytoplasmic vesicle. Its subcellular location is the secretory vesicle. The protein localises to the acrosome lumen. Functionally, binds to ZP3 glycoprotein in egg zona pellucida. Probably involved in interactions between sperm acrosome and egg zona pellucida during and immediately following the acrosome reaction. The chain is Zona pellucida sperm-binding protein 3 receptor (Zp3r) from Rattus norvegicus (Rat).